We begin with the raw amino-acid sequence, 434 residues long: Ribosomal protein uS12 methylthiotransferase RimO (434 aa).

The MTTase N-terminal domain occupies proline 9 to arginine 125. Residues cysteine 18, cysteine 54, cysteine 88, cysteine 149, cysteine 153, and cysteine 156 each contribute to the [4Fe-4S] cluster site. In terms of domain architecture, Radical SAM core spans leucine 135–serine 364. A TRAM domain is found at arginine 367–glycine 434.

This sequence belongs to the methylthiotransferase family. RimO subfamily. Requires [4Fe-4S] cluster as cofactor.

Its subcellular location is the cytoplasm. It carries out the reaction L-aspartate(89)-[ribosomal protein uS12]-hydrogen + (sulfur carrier)-SH + AH2 + 2 S-adenosyl-L-methionine = 3-methylsulfanyl-L-aspartate(89)-[ribosomal protein uS12]-hydrogen + (sulfur carrier)-H + 5'-deoxyadenosine + L-methionine + A + S-adenosyl-L-homocysteine + 2 H(+). Catalyzes the methylthiolation of an aspartic acid residue of ribosomal protein uS12. The sequence is that of Ribosomal protein uS12 methylthiotransferase RimO from Chlorobaculum tepidum (strain ATCC 49652 / DSM 12025 / NBRC 103806 / TLS) (Chlorobium tepidum).